The chain runs to 124 residues: Small ribosomal subunit protein uS12 (124 aa).

At aspartate 89 the chain carries 3-methylthioaspartic acid. Residues 104-124 (LQGVKDRKQSRSKYGAKRPKK) form a disordered region. Positions 113-124 (SRSKYGAKRPKK) are enriched in basic residues.

This sequence belongs to the universal ribosomal protein uS12 family. Part of the 30S ribosomal subunit. Contacts proteins S8 and S17. May interact with IF1 in the 30S initiation complex.

In terms of biological role, with S4 and S5 plays an important role in translational accuracy. Interacts with and stabilizes bases of the 16S rRNA that are involved in tRNA selection in the A site and with the mRNA backbone. Located at the interface of the 30S and 50S subunits, it traverses the body of the 30S subunit contacting proteins on the other side and probably holding the rRNA structure together. The combined cluster of proteins S8, S12 and S17 appears to hold together the shoulder and platform of the 30S subunit. The sequence is that of Small ribosomal subunit protein uS12 from Thiomonas delicata (Thiomonas cuprina).